Here is a 103-residue protein sequence, read N- to C-terminus: Defensin-like protein 290 (103 aa).

An N-terminal signal peptide occupies residues 1 to 29 (MTALRRTISIIFVFYLSCTLFVNIFGVQA). 6 disulfide bridges follow: cysteine 33–cysteine 50, cysteine 39–cysteine 55, cysteine 43–cysteine 57, cysteine 72–cysteine 92, cysteine 78–cysteine 98, and cysteine 84–cysteine 100.

It belongs to the DEFL family.

Its subcellular location is the secreted. This Arabidopsis thaliana (Mouse-ear cress) protein is Defensin-like protein 290.